A 131-amino-acid polypeptide reads, in one-letter code: MSWQAYVDEHLMCEIEGHHLASAAILGHDGTVWAQSADFPQFKPEEITGIMKDFDEPGHLAPTGMFVAAAKYMVIQGEPGAVIRGKKGAGGITIKKTGQALVVGIYDEPMTPGQCNMVVERLGDYLVKQGL.

An intrachain disulfide couples Cys13 to Cys115. The Involved in PIP2 interaction motif lies at 81 to 97 (AVIRGKKGAGGITIKKT). At Thr111 the chain carries Phosphothreonine.

This sequence belongs to the profilin family. Occurs in many kinds of cells as a complex with monomeric actin in a 1:1 ratio. Post-translationally, phosphorylated by MAP kinases.

Its subcellular location is the cytoplasm. The protein localises to the cytoskeleton. In terms of biological role, binds to actin and affects the structure of the cytoskeleton. At high concentrations, profilin prevents the polymerization of actin, whereas it enhances it at low concentrations. The chain is Profilin-5 from Phleum pratense (Common timothy).